The sequence spans 1091 residues: ATP-dependent helicase/deoxyribonuclease subunit B (1091 aa).

This sequence belongs to the helicase family. AddB/RexB type 2 subfamily. As to quaternary structure, heterodimer of AddA and RexB. Mg(2+) is required as a cofactor.

The heterodimer acts as both an ATP-dependent DNA helicase and an ATP-dependent, dual-direction single-stranded exonuclease. Recognizes the chi site generating a DNA molecule suitable for the initiation of homologous recombination. This subunit has 5' -&gt; 3' nuclease activity but not helicase activity. In Streptococcus pneumoniae (strain Hungary19A-6), this protein is ATP-dependent helicase/deoxyribonuclease subunit B.